Consider the following 460-residue polypeptide: Cysteine--tRNA ligase (460 aa).

Cys28 lines the Zn(2+) pocket. Residues 30–40 (VTIYDLCHIGH) carry the 'HIGH' region motif. 3 residues coordinate Zn(2+): Cys209, His234, and Glu238. The 'KMSKS' region motif lies at 266–270 (KMSKS). Lys269 serves as a coordination point for ATP.

It belongs to the class-I aminoacyl-tRNA synthetase family. In terms of assembly, monomer. It depends on Zn(2+) as a cofactor.

The protein resides in the cytoplasm. It carries out the reaction tRNA(Cys) + L-cysteine + ATP = L-cysteinyl-tRNA(Cys) + AMP + diphosphate. The polypeptide is Cysteine--tRNA ligase (Vibrio vulnificus (strain CMCP6)).